Here is a 196-residue protein sequence, read N- to C-terminus: tRNA(Phe) 7-((3-amino-3-carboxypropyl)-4-demethylwyosine(37)-N(4))-methyltransferase (196 aa).

This sequence belongs to the TYW3 family.

The enzyme catalyses 4-demethyl-7-[(3S)-3-amino-3-carboxypropyl]wyosine(37) in tRNA(Phe) + S-adenosyl-L-methionine = 7-[(3S)-3-amino-3-carboxypropyl]wyosine(37) in tRNA(Phe) + S-adenosyl-L-homocysteine + H(+). S-adenosyl-L-methionine-dependent methyltransferase that acts as a component of the wyosine derivatives biosynthesis pathway. Probably methylates N-4 position of wybutosine-86 to produce wybutosine-72. This chain is tRNA(Phe) 7-((3-amino-3-carboxypropyl)-4-demethylwyosine(37)-N(4))-methyltransferase, found in Archaeoglobus fulgidus (strain ATCC 49558 / DSM 4304 / JCM 9628 / NBRC 100126 / VC-16).